The following is a 342-amino-acid chain: Phenylalanine--tRNA ligase alpha subunit (342 aa).

E257 serves as a coordination point for Mg(2+).

The protein belongs to the class-II aminoacyl-tRNA synthetase family. Phe-tRNA synthetase alpha subunit type 1 subfamily. As to quaternary structure, tetramer of two alpha and two beta subunits. Mg(2+) is required as a cofactor.

The protein resides in the cytoplasm. The catalysed reaction is tRNA(Phe) + L-phenylalanine + ATP = L-phenylalanyl-tRNA(Phe) + AMP + diphosphate + H(+). This is Phenylalanine--tRNA ligase alpha subunit from Legionella pneumophila subsp. pneumophila (strain Philadelphia 1 / ATCC 33152 / DSM 7513).